Consider the following 103-residue polypeptide: Large ribosomal subunit protein uL24 (103 aa).

Belongs to the universal ribosomal protein uL24 family. In terms of assembly, part of the 50S ribosomal subunit.

Functionally, one of two assembly initiator proteins, it binds directly to the 5'-end of the 23S rRNA, where it nucleates assembly of the 50S subunit. One of the proteins that surrounds the polypeptide exit tunnel on the outside of the subunit. The sequence is that of Large ribosomal subunit protein uL24 from Synechococcus sp. (strain CC9311).